The primary structure comprises 597 residues: Miltiradiene synthase KSL2, chloroplastic (597 aa).

A chloroplast-targeting transit peptide spans 1–51 (MSLAFNLRAIPFSGHTIQSRRGLFPVHESPMITTKPFVAVKCSLTTSTDLM). Residues Asp-329, Asp-333, Asn-473, and Glu-481 each contribute to the Mg(2+) site. A DDXXD motif motif is present at residues 329–333 (DDFFD).

This sequence belongs to the terpene synthase family. Mg(2+) is required as a cofactor.

Its subcellular location is the plastid. It is found in the chloroplast. It carries out the reaction (+)-copalyl diphosphate = miltiradiene + diphosphate. It functions in the pathway secondary metabolite biosynthesis; terpenoid biosynthesis. Its function is as follows. Involved in the biosynthesis of ent-kaurene diterpenoids natural products such as oridonin, miltiradiene, eriocalyxin B and nezukol, known to exhibit antitumor, anti-inflammatory and antibacterial activities. Catalyzes the conversion of (+)-copalyl diphosphate ((+)-CPP) to miltiradiene. The polypeptide is Miltiradiene synthase KSL2, chloroplastic (Isodon japonicus (Scutellaria japonica)).